A 414-amino-acid polypeptide reads, in one-letter code: Snake venom metalloproteinase atrolysin-B (414 aa).

Residues 1 to 20 (MIEVLLVTICLAVFPYQGSS) form the signal peptide. A propeptide spanning residues 21–190 (IILESGNVND…KASDLNLNPD (170 aa)) is cleaved from the precursor. At Gln-191 the chain carries Pyrrolidone carboxylic acid. One can recognise a Peptidase M12B domain in the interval 197 to 393 (RYIELVVVAD…YKPQCILNKP (197 aa)). Positions 200 and 284 each coordinate Ca(2+). 2 cysteine pairs are disulfide-bonded: Cys-308–Cys-388 and Cys-348–Cys-355. His-333 is a binding site for Zn(2+). Glu-334 is an active-site residue. Residues His-337 and His-343 each coordinate Zn(2+). Residues Cys-388, Asn-391, Val-403, Asn-406, Leu-408, Glu-410, and Glu-413 each coordinate Ca(2+). A propeptide spanning residues 394–414 (LRIDPVSTPVSGNELLEAGEE) is cleaved from the precursor.

Belongs to the venom metalloproteinase (M12B) family. P-I subfamily. Monomer. Zn(2+) is required as a cofactor. Post-translationally, the N-terminus is blocked. In terms of tissue distribution, expressed by the venom gland.

Its subcellular location is the secreted. It catalyses the reaction Cleavage of 5-His-|-Leu-6, 10-His-|-Leu-11, 14-Ala-|-Leu-15, 16-Tyr-|-Leu-17 and 23-Gly-|-Phe-24 of insulin B chain. Identical to the cleavage of insulin B chain by atrolysin C. Also cleaves Xaa-|-Ser bonds in glucagon.. In terms of biological role, snake venom metalloproteinase that impairs hemostasis in the envenomed animal. In Crotalus atrox (Western diamondback rattlesnake), this protein is Snake venom metalloproteinase atrolysin-B.